Here is a 311-residue protein sequence, read N- to C-terminus: tRNA dimethylallyltransferase (311 aa).

Residue 16–23 (GATASGKS) coordinates ATP. 18–23 (TASGKS) provides a ligand contact to substrate. Interaction with substrate tRNA stretches follow at residues 41–44 (DSRQ) and 165–169 (QRLIR).

This sequence belongs to the IPP transferase family. As to quaternary structure, monomer. It depends on Mg(2+) as a cofactor.

The catalysed reaction is adenosine(37) in tRNA + dimethylallyl diphosphate = N(6)-dimethylallyladenosine(37) in tRNA + diphosphate. Functionally, catalyzes the transfer of a dimethylallyl group onto the adenine at position 37 in tRNAs that read codons beginning with uridine, leading to the formation of N6-(dimethylallyl)adenosine (i(6)A). This is tRNA dimethylallyltransferase from Chlorobium chlorochromatii (strain CaD3).